We begin with the raw amino-acid sequence, 171 residues long: Iron-sulfur cluster assembly protein 3 (171 aa).

A mitochondrion-targeting transit peptide spans 1-49 (MLRQTTKRAFLGLASQNPTPFPVVSRLYHPNVIDHYDNPRNVGSFDKND).

This sequence belongs to the NifU family. Component of the core Fe-S cluster (ISC) assembly machinery. [2Fe-2S] cluster serves as cofactor. In terms of tissue distribution, mostly expressed in flowers and pollen, and, to a lower extent, in leaves and roots.

The protein resides in the mitochondrion matrix. It functions in the pathway cofactor biosynthesis; iron-sulfur cluster biosynthesis. Scaffold protein for the de novo synthesis of iron-sulfur (Fe-S) clusters within mitochondria, which is required for maturation of both mitochondrial and cytoplasmic [2Fe-2S] and [4Fe-4S] proteins. First, a [2Fe-2S] cluster is transiently assembled on the scaffold protein ISCU (ISU1, ISU2 or ISU3). In a second step, the cluster is released from ISCU, transferred to a glutaredoxin, followed by the formation of mitochondrial [2Fe-2S] proteins, the synthesis of [4Fe-4S] clusters and their target-specific insertion into the recipient apoproteins. Cluster assembly on ISCU depends on the function of the cysteine desulfurase complex NFS1-ISD11, which serves as the sulfur donor for cluster synthesis, the iron-binding protein frataxin as the putative iron donor, and the electron transfer chain comprised of ferredoxin reductase and ferredoxin, which receive their electrons from NADH. In Arabidopsis thaliana (Mouse-ear cress), this protein is Iron-sulfur cluster assembly protein 3 (ISU3).